The primary structure comprises 374 residues: tRNA-specific 2-thiouridylase MnmA (374 aa).

Residues 13–20 and Met-39 contribute to the ATP site; that span reads GMSGGVDS. The segment at 99 to 101 is interaction with target base in tRNA; it reads NPD. Cys-104 serves as the catalytic Nucleophile. Cys-104 and Cys-201 form a disulfide bridge. Gly-128 serves as a coordination point for ATP. An interaction with tRNA region spans residues 151 to 153; sequence KDQ. Cys-201 functions as the Cysteine persulfide intermediate in the catalytic mechanism. The interaction with tRNA stretch occupies residues 313 to 314; it reads RY.

The protein belongs to the MnmA/TRMU family.

It is found in the cytoplasm. It carries out the reaction S-sulfanyl-L-cysteinyl-[protein] + uridine(34) in tRNA + AH2 + ATP = 2-thiouridine(34) in tRNA + L-cysteinyl-[protein] + A + AMP + diphosphate + H(+). Catalyzes the 2-thiolation of uridine at the wobble position (U34) of tRNA, leading to the formation of s(2)U34. This Streptococcus suis (strain 98HAH33) protein is tRNA-specific 2-thiouridylase MnmA.